The following is a 372-amino-acid chain: MSIAPPPLSVLLELTHRCPLACPYCSNPIALAALREEMDTAGWRSLLQQAADMGVLQAHFSGGEPMLRKDLPELVAHARALGLYSNLITSGVAGGEPMLDQLQAAGLEHVQLSVQDVDAAGADRIAGYRNSLSKKREFAAAVRARGLPLTINAVLHRHNAERVPGMIALALEWQAERIEVAHTQYDGWGLRNRAALMPSREQLLATIDAVETARRQLGDRLAIDFVTPDYYARQPKPCMGGWGQRFVNISPRGDVLPCHAAETIDGLRFDNLRERSLADIWNNGEAFVRFRGTAWMPEVCQGCPKREIDWGGCRCQALALSGDAATLDPVCERSPIHAQVRATAEQESASPAPAFIYRRPERPAAATADPLE.

One can recognise a Radical SAM core domain in the interval 4-220 (APPPLSVLLE…ETARRQLGDR (217 aa)). [4Fe-4S] cluster-binding residues include C18, C22, and C25. The tract at residues 342–372 (ATAEQESASPAPAFIYRRPERPAAATADPLE) is disordered.

This sequence belongs to the radical SAM superfamily. PqqE family. As to quaternary structure, interacts with PqqD. The interaction is necessary for activity of PqqE. It depends on [4Fe-4S] cluster as a cofactor.

It catalyses the reaction [PQQ precursor protein] + S-adenosyl-L-methionine = E-Y cross-linked-[PQQ precursor protein] + 5'-deoxyadenosine + L-methionine + H(+). It functions in the pathway cofactor biosynthesis; pyrroloquinoline quinone biosynthesis. Catalyzes the cross-linking of a glutamate residue and a tyrosine residue in the PqqA protein as part of the biosynthesis of pyrroloquinoline quinone (PQQ). This Xanthomonas euvesicatoria pv. vesicatoria (strain 85-10) (Xanthomonas campestris pv. vesicatoria) protein is PqqA peptide cyclase.